Here is a 160-residue protein sequence, read N- to C-terminus: MLVLLAGLFVVHIATAIMLFVSTIANVWMVADYANASVGLWKNCTGGNCDGSLSYGNEDAIKAVQAFMILSIIFSIISLVVFVFQLFTMEKGNRFFLSGSTMLVCWLCILVGVSIYTHHYAHSEGNFNSSSHQGYCFILTWICFCFSFIIGILYMVLRKK.

A helical membrane pass occupies residues 1 to 21; that stretch reads MLVLLAGLFVVHIATAIMLFV. N-linked (GlcNAc...) asparagine glycosylation is found at Asn35 and Asn43. A run of 2 helical transmembrane segments spans residues 67–87 and 95–115; these read FMIL…FQLF and FFLS…GVSI. N-linked (GlcNAc...) asparagine glycosylation occurs at Asn128. Residues 137–157 traverse the membrane as a helical segment; the sequence is FILTWICFCFSFIIGILYMVL.

This sequence belongs to the PMP-22/EMP/MP20 family.

The protein resides in the membrane. The sequence is that of Epithelial membrane protein 1 (Emp1) from Mus musculus (Mouse).